We begin with the raw amino-acid sequence, 1030 residues long: Importin beta-like SAD2 homolog (1030 aa).

At methionine 1 the chain carries N-acetylmethionine. Positions 25-99 (AEQSLNQLQH…RNQILVFVSQ (75 aa)) constitute an Importin N-terminal domain. Disordered regions lie at residues 886-928 (AAKA…GSTL) and 940-964 (SYSD…PIDE). Composition is skewed to acidic residues over residues 890 to 924 (EEEE…DETD) and 943 to 964 (DDDD…PIDE).

The protein belongs to the importin beta family.

The protein localises to the cytoplasm. The protein resides in the nucleus. Functions probably in nuclear protein import, either by acting as autonomous nuclear transport receptor or as an adapter-like protein in association with other importin subunits. This Arabidopsis thaliana (Mouse-ear cress) protein is Importin beta-like SAD2 homolog.